A 92-amino-acid chain; its full sequence is Protein RnfH (92 aa).

Belongs to the UPF0125 (RnfH) family.

The protein is Protein RnfH of Neisseria gonorrhoeae (strain NCCP11945).